Here is a 342-residue protein sequence, read N- to C-terminus: GTPase Obg (342 aa).

One can recognise an Obg domain in the interval 1 to 159 (MKFLDLCKVY…RTIWLRLKLI (159 aa)). In terms of domain architecture, OBG-type G spans 160–327 (ADAGLLGLPN…VLRALWAEID (168 aa)). GTP contacts are provided by residues 166-173 (GLPNAGKS), 191-195 (FTTLV), 212-215 (DIPG), 279-282 (NKID), and 308-310 (SGV). Mg(2+)-binding residues include serine 173 and threonine 193.

Belongs to the TRAFAC class OBG-HflX-like GTPase superfamily. OBG GTPase family. Monomer. It depends on Mg(2+) as a cofactor.

It is found in the cytoplasm. An essential GTPase which binds GTP, GDP and possibly (p)ppGpp with moderate affinity, with high nucleotide exchange rates and a fairly low GTP hydrolysis rate. Plays a role in control of the cell cycle, stress response, ribosome biogenesis and in those bacteria that undergo differentiation, in morphogenesis control. The sequence is that of GTPase Obg from Cereibacter sphaeroides (strain ATCC 17025 / ATH 2.4.3) (Rhodobacter sphaeroides).